The sequence spans 287 residues: ATP synthase gamma chain (287 aa).

This sequence belongs to the ATPase gamma chain family. F-type ATPases have 2 components, CF(1) - the catalytic core - and CF(0) - the membrane proton channel. CF(1) has five subunits: alpha(3), beta(3), gamma(1), delta(1), epsilon(1). CF(0) has three main subunits: a, b and c.

The protein localises to the cell inner membrane. Its function is as follows. Produces ATP from ADP in the presence of a proton gradient across the membrane. The gamma chain is believed to be important in regulating ATPase activity and the flow of protons through the CF(0) complex. This Tolumonas auensis (strain DSM 9187 / NBRC 110442 / TA 4) protein is ATP synthase gamma chain.